We begin with the raw amino-acid sequence, 507 residues long: tRNA(Ile)-lysidine synthase (507 aa).

24-29 (SGGGDS) is an ATP binding site. The CMP/dCMP-type deaminase domain maps to 370–500 (PPEEAHMAEA…KLLRDFFARL (131 aa)). Residues histidine 420, cysteine 445, and cysteine 448 each contribute to the Zn(2+) site.

It belongs to the tRNA(Ile)-lysidine synthase family.

The protein resides in the cytoplasm. It carries out the reaction cytidine(34) in tRNA(Ile2) + L-lysine + ATP = lysidine(34) in tRNA(Ile2) + AMP + diphosphate + H(+). In terms of biological role, ligates lysine onto the cytidine present at position 34 of the AUA codon-specific tRNA(Ile) that contains the anticodon CAU, in an ATP-dependent manner. Cytidine is converted to lysidine, thus changing the amino acid specificity of the tRNA from methionine to isoleucine. This Thermus thermophilus (strain ATCC BAA-163 / DSM 7039 / HB27) protein is tRNA(Ile)-lysidine synthase (tilS).